The primary structure comprises 81 residues: Teretoxin Tsu6.8 (81 aa).

An N-terminal signal peptide occupies residues 1-21 (MATSGRLLCLCLVLGLIFESL). Residues 22–45 (GHPVMGEKRAGENASPSARSLPKR) constitute a propeptide that is removed on maturation.

Belongs to the teretoxin M (TM) superfamily. In terms of processing, contains 3 disulfide bonds. In terms of tissue distribution, expressed by the venom duct.

Its subcellular location is the secreted. The polypeptide is Teretoxin Tsu6.8 (Terebra subulata (Chocolate spotted auger)).